Here is a 491-residue protein sequence, read N- to C-terminus: Ribosome biogenesis protein YTM1 (491 aa).

Residues 8–103 (IKIKFTTNES…EAFLTIEYTR (96 aa)) are ubiquitin-like (UBL) domain. A sufficient for interaction with ERB1 and association with 66S pre-ribosomes region spans residues 113–491 (SFQNDDWISS…QINKGSDISK (379 aa)). WD repeat units lie at residues 128-167 (RNLS…EKQY), 169-207 (GHSA…VVDQ), 241-280 (GHKA…MAKI), 318-358 (GHTE…CVDT), 360-399 (TTGF…SNTN), 409-449 (GHTN…SLYT), and 456-491 (STKS…DISK). The segment at 205–228 (VDQNEEDEEENEANEGDDGDNDME) is disordered. Residues 207-225 (QNEEDEEENEANEGDDGDN) show a composition bias toward acidic residues.

Belongs to the WD repeat WDR12/YTM1 family. In terms of assembly, component of the NOP7 complex, composed of ERB1, NOP7 and YTM1. The complex is held together by ERB1, which interacts with NOP7 via its N-terminal domain and with YTM1 via a high-affinity interaction between the seven-bladed beta-propeller domains of the 2 proteins. The NOP7 complex associates with the 66S pre-ribosome. Interacts (via UBL domain) with MDN1 (via VWFA/MIDAS domain).

It localises to the nucleus. Its subcellular location is the nucleolus. The protein localises to the nucleoplasm. Component of the NOP7 complex, which is required for maturation of the 25S and 5.8S ribosomal RNAs and formation of the 60S ribosome. This Lodderomyces elongisporus (strain ATCC 11503 / CBS 2605 / JCM 1781 / NBRC 1676 / NRRL YB-4239) (Yeast) protein is Ribosome biogenesis protein YTM1.